Here is a 265-residue protein sequence, read N- to C-terminus: Putative hydro-lyase PA14_37210 (265 aa).

The protein belongs to the D-glutamate cyclase family.

The sequence is that of Putative hydro-lyase PA14_37210 from Pseudomonas aeruginosa (strain UCBPP-PA14).